The sequence spans 130 residues: MATTSKKSGSKKSKRNVPNGVVHIQSTFNNTIVSITDTSGEVISWSSAGASGFKGARKGTPFAAQTAAELAARRALEQGMRQIEVLVRGPGSGRETAIRALQVAGLEITLIRDVTPLPHNGCRRPKRRRV.

This sequence belongs to the universal ribosomal protein uS11 family. In terms of assembly, part of the 30S ribosomal subunit. Interacts with proteins S7 and S18. Binds to IF-3.

Located on the platform of the 30S subunit, it bridges several disparate RNA helices of the 16S rRNA. Forms part of the Shine-Dalgarno cleft in the 70S ribosome. The chain is Small ribosomal subunit protein uS11 from Prochlorococcus marinus (strain NATL2A).